A 598-amino-acid chain; its full sequence is Elongation factor 4 (598 aa).

In terms of domain architecture, tr-type G spans 4–186; that stretch reads SHIRNFSIIA…VIVNKIPPPE (183 aa). GTP contacts are provided by residues 16-21 and 133-136; these read DHGKST and NKID.

The protein belongs to the TRAFAC class translation factor GTPase superfamily. Classic translation factor GTPase family. LepA subfamily.

It localises to the cell inner membrane. The enzyme catalyses GTP + H2O = GDP + phosphate + H(+). Required for accurate and efficient protein synthesis under certain stress conditions. May act as a fidelity factor of the translation reaction, by catalyzing a one-codon backward translocation of tRNAs on improperly translocated ribosomes. Back-translocation proceeds from a post-translocation (POST) complex to a pre-translocation (PRE) complex, thus giving elongation factor G a second chance to translocate the tRNAs correctly. Binds to ribosomes in a GTP-dependent manner. The sequence is that of Elongation factor 4 from Alteromonas mediterranea (strain DSM 17117 / CIP 110805 / LMG 28347 / Deep ecotype).